The primary structure comprises 42 residues: Cytochrome b6-f complex subunit 7 (42 aa).

Residues 19–37 (AVTCIFMTLFGLSLGFALL) form a helical membrane-spanning segment.

This sequence belongs to the PetM family. As to quaternary structure, the 4 large subunits of the cytochrome b6-f complex are cytochrome b6, subunit IV (17 kDa polypeptide, PetD), cytochrome f and the Rieske protein, while the 4 small subunits are PetG, PetL, PetM and PetN. The complex functions as a dimer.

The protein resides in the plastid. Its subcellular location is the chloroplast thylakoid membrane. Functionally, component of the cytochrome b6-f complex, which mediates electron transfer between photosystem II (PSII) and photosystem I (PSI), cyclic electron flow around PSI, and state transitions. The sequence is that of Cytochrome b6-f complex subunit 7 from Thalassiosira pseudonana (Marine diatom).